An 86-amino-acid chain; its full sequence is MEERDDIITLLDEEGKEQDFEVIMTLEVEGNEYAILAPVDSDEDEDAYVFKIVYENEDEYSLVTIEDDEEYDNVVAAYETLMDEEM.

It belongs to the UPF0473 family.

In Alkaliphilus oremlandii (strain OhILAs) (Clostridium oremlandii (strain OhILAs)), this protein is UPF0473 protein Clos_1662.